Here is a 138-residue protein sequence, read N- to C-terminus: Transcription antitermination protein NusB (138 aa).

Belongs to the NusB family.

Involved in transcription antitermination. Required for transcription of ribosomal RNA (rRNA) genes. Binds specifically to the boxA antiterminator sequence of the ribosomal RNA (rrn) operons. This is Transcription antitermination protein NusB from Leptospira interrogans serogroup Icterohaemorrhagiae serovar copenhageni (strain Fiocruz L1-130).